Reading from the N-terminus, the 108-residue chain is Transcriptional activator HlyU (108 aa).

Residues 13-107 (EMEKNSAKAV…LLHRLYCQAN (95 aa)) form the HTH arsR-type domain. The segment at residues 47-66 (VGELSSRLELSQSALSQHLA) is a DNA-binding region (H-T-H motif).

Its function is as follows. Up-regulates the expression of the hemolysin gene, hlyA, and may promote expression of other virulence determinants in vivo. It may have both positive and negative regulator activities. The polypeptide is Transcriptional activator HlyU (hlyU) (Vibrio cholerae serotype O1 (strain ATCC 39315 / El Tor Inaba N16961)).